A 1403-amino-acid polypeptide reads, in one-letter code: Mannuronan C5-epimerase AlgE1 (1403 aa).

PbH1 repeat units lie at residues 133–155 (DRDV…DPHE), 157–179 (TINL…VADY), 180–202 (QVGG…NIVT), 204–226 (TNDF…VVQR), 257–279 (AHDV…RVYG), 280–302 (AQDV…YAEV), and 320–359 (TTGT…SIDG). 2 disordered regions span residues 372–395 (STVS…NDAL) and 408–428 (AGDD…GAGR). Hemolysin-type calcium-binding repeat units follow at residues 388–403 (GSAG…AHET), 406–422 (GQAG…NDIL), 424–440 (GGAG…ADTF), 557–573 (GYGG…DDIL), 574–591 (VGGA…ADVF), 697–712 (EGTD…EANE), 716–732 (GLDG…DDIL), and 734–750 (GGAG…ADTF). PbH1 repeat units follow at residues 977–999 (DRNV…DPHE), 1001–1023 (TINL…VADY), 1024–1046 (LVDS…NIVT), 1048–1070 (TYDF…TIQR), 1101–1123 (TNNV…RLYG), 1124–1146 (TEDV…YPEV), 1163–1185 (TLNT…AVRE), and 1190–1212 (SDYT…QLSG). 3 Hemolysin-type calcium-binding repeats span residues 1227-1243 (GTDG…NDQL), 1244-1261 (YGGA…DDLL), and 1263-1279 (GGAG…ADTF).

The protein belongs to the D-mannuronate C5-epimerase family. Ca(2+) serves as cofactor.

It localises to the secreted. It catalyses the reaction [(1-&gt;4)-beta-D-mannuronosyl](n) = [alginate](n). The protein operates within glycan biosynthesis; alginate biosynthesis. Its activity is regulated as follows. Inhibited by zinc. In terms of biological role, converts beta-D-mannuronic acid (M) to alpha-L-guluronic acid (G), producing a polymer with gel-forming capacity, required for the formation of the cyst coat. The polypeptide is Mannuronan C5-epimerase AlgE1 (Azotobacter vinelandii).